The sequence spans 177 residues: Large ribosomal subunit protein uL6 (177 aa).

The protein belongs to the universal ribosomal protein uL6 family. Part of the 50S ribosomal subunit.

In terms of biological role, this protein binds to the 23S rRNA, and is important in its secondary structure. It is located near the subunit interface in the base of the L7/L12 stalk, and near the tRNA binding site of the peptidyltransferase center. This is Large ribosomal subunit protein uL6 from Yersinia enterocolitica serotype O:8 / biotype 1B (strain NCTC 13174 / 8081).